Reading from the N-terminus, the 1023-residue chain is Protein FAM13A (1023 aa).

One can recognise a Rho-GAP domain in the interval Val43 to Phe231. The disordered stretch occupies residues Leu269–Ser290. Residue Ser345 is modified to Phosphoserine. Disordered stretches follow at residues Val381–Asn437 and Cys459–Gln562. Residues Ser384–Ala405 are compositionally biased toward low complexity. Composition is skewed to basic and acidic residues over residues Ser412–Ile427 and Ser509–His524. The span at Pro536–Ala549 shows a compositional bias: polar residues. Residues Ser597 and Ser617 each carry the phosphoserine modification. Disordered stretches follow at residues Gln628–Leu663 and Ile726–Glu759. The stretch at Ala666–Asp730 forms a coiled coil. Residue Ser727 is modified to Phosphoserine. At Thr732 the chain carries Phosphothreonine. Residues Arg738–Ser748 show a composition bias toward polar residues. Residues Leu750–Glu759 are compositionally biased toward basic and acidic residues. The stretch at Ala946–Arg978 forms a coiled coil.

The protein belongs to the FAM13 family. In terms of tissue distribution, isoform 1 is widely expressed, with highest expression in skeletal muscle, thymus, brain and lung. Isoform 3 is less abundant than isoform 1 and predominantly expressed in kidney, pancreas, liver, lung and thymus.

The protein is Protein FAM13A (FAM13A) of Homo sapiens (Human).